A 178-amino-acid polypeptide reads, in one-letter code: Nicotinamide-nucleotide adenylyltransferase (178 aa).

It belongs to the archaeal NMN adenylyltransferase family. In terms of assembly, homohexamer.

It localises to the cytoplasm. It carries out the reaction beta-nicotinamide D-ribonucleotide + ATP + H(+) = diphosphate + NAD(+). Its pathway is cofactor biosynthesis; NAD(+) biosynthesis; NAD(+) from nicotinamide D-ribonucleotide: step 1/1. The chain is Nicotinamide-nucleotide adenylyltransferase from Methanothermobacter thermautotrophicus (strain ATCC 29096 / DSM 1053 / JCM 10044 / NBRC 100330 / Delta H) (Methanobacterium thermoautotrophicum).